Consider the following 523-residue polypeptide: Cytochrome P450 CYP82J17 (523 aa).

A helical transmembrane segment spans residues Phe-4 to Trp-24. Position 462 (Cys-462) interacts with heme.

This sequence belongs to the cytochrome P450 family. As to expression, mainly expressed in leaves and seed pods and, to a lower extent, in flowers and stems.

It is found in the membrane. It participates in steroid metabolism; cholesterol metabolism. Involved in the biosynthesis of spiroketal steroid and saponin natural products from cholesterol such as diosgenin and analogs (e.g. furostanol and spirostanol), plant defense compounds used as main precursors for the industrial production of steroid hormones. During the 5,6-spiroketalization of cholesterol, may catalyze the 27-monohydroxylation of furostanol-type steroid to an intermediate product that undergoes a stereospecific formation of the terminal heterocycle to yield diosgenin. The protein is Cytochrome P450 CYP82J17 of Trigonella foenum-graecum (Fenugreek).